Here is a 192-residue protein sequence, read N- to C-terminus: MQENKQPSEIQGELPQPPDGESVPPQPTNEQAPPDTDTMPRIEETLRQLELKAAEHHDAWLRARAETENVRRRAQEDIAKASKFAAEKFAAAMLPVKDSLEAALTIEKQTLESLREGVELTLKQLNAAFQNGGLTEEDPAGQKFDPNKHQAISAIEAEGEPNTVLNVLQKGYLLHGRVIRPAMVMVSKAKGT.

Residues 1–43 (MQENKQPSEIQGELPQPPDGESVPPQPTNEQAPPDTDTMPRIE) are disordered.

Belongs to the GrpE family. As to quaternary structure, homodimer.

It is found in the cytoplasm. Participates actively in the response to hyperosmotic and heat shock by preventing the aggregation of stress-denatured proteins, in association with DnaK and GrpE. It is the nucleotide exchange factor for DnaK and may function as a thermosensor. Unfolded proteins bind initially to DnaJ; upon interaction with the DnaJ-bound protein, DnaK hydrolyzes its bound ATP, resulting in the formation of a stable complex. GrpE releases ADP from DnaK; ATP binding to DnaK triggers the release of the substrate protein, thus completing the reaction cycle. Several rounds of ATP-dependent interactions between DnaJ, DnaK and GrpE are required for fully efficient folding. In Aromatoleum aromaticum (strain DSM 19018 / LMG 30748 / EbN1) (Azoarcus sp. (strain EbN1)), this protein is Protein GrpE.